Reading from the N-terminus, the 172-residue chain is Large ribosomal subunit protein uL10 (172 aa).

This sequence belongs to the universal ribosomal protein uL10 family. Part of the ribosomal stalk of the 50S ribosomal subunit. The N-terminus interacts with L11 and the large rRNA to form the base of the stalk. The C-terminus forms an elongated spine to which L12 dimers bind in a sequential fashion forming a multimeric L10(L12)X complex.

In terms of biological role, forms part of the ribosomal stalk, playing a central role in the interaction of the ribosome with GTP-bound translation factors. The polypeptide is Large ribosomal subunit protein uL10 (rplJ) (Liberibacter africanus subsp. capensis).